The following is a 154-amino-acid chain: Cindoxin (154 aa).

A Flavodoxin-like domain is found at 3-145 (ALILYGTETG…TAEEWAREIL (143 aa)). FMN-binding positions include 9 to 13 (TETGN) and 89 to 120 (VFGL…TQVG).

Requires FMN as cofactor.

In terms of biological role, involved in the degradation of cineol (eucalyptol). The FMN protein, cindoxin, shuttles electrons between the FAD-containing cindoxin reductase (CinB) and 1,8-cineole 2-endo-monooxygenase (CinA). The polypeptide is Cindoxin (cinC) (Citrobacter braakii).